Reading from the N-terminus, the 658-residue chain is Glycogen debranching enzyme (658 aa).

Asp-335 (nucleophile) is an active-site residue. Glu-370 serves as the catalytic Proton donor. Positions Asn-457–Thr-468 are enriched in basic and acidic residues. A disordered region spans residues Asn-457 to Thr-478.

It belongs to the glycosyl hydrolase 13 family.

The enzyme catalyses Hydrolysis of (1-&gt;6)-alpha-D-glucosidic linkages to branches with degrees of polymerization of three or four glucose residues in limit dextrin.. The protein operates within glycan degradation; glycogen degradation. Functionally, removes maltotriose and maltotetraose chains that are attached by 1,6-alpha-linkage to the limit dextrin main chain, generating a debranched limit dextrin. The polypeptide is Glycogen debranching enzyme (Pectobacterium carotovorum subsp. carotovorum (strain PC1)).